Here is a 76-residue protein sequence, read N- to C-terminus: Omega-conotoxin MoVIA (76 aa).

Residues 1–22 (MKLTCVVIVAVLFLTACQLITA) form the signal peptide. A propeptide spanning residues 23–45 (DDSRSTQRHRALRSTTKLSMSTR) is cleaved from the precursor. 3 cysteine pairs are disulfide-bonded: Cys46/Cys61, Cys53/Cys64, and Cys60/Cys71. A hydroxyproline mark is found at Pro49 and Pro55.

The protein belongs to the conotoxin O1 superfamily. In terms of tissue distribution, expressed by the venom duct.

The protein localises to the secreted. Its function is as follows. Omega-conotoxins act at presynaptic membranes, they bind and block voltage-gated calcium channels (Cav). This toxin potently blocks mammalian N-type calcium channels (Cav2.2/CACNA1B) (IC(50)=330 nM on human channels). It is 9-fold more potent in displacing radiolabeled omega-conotoxin GVIA from fish brain membranes than from human SH-SY5Y cells. Functionally, omega-conotoxins act at presynaptic membranes, they bind and block voltage-gated calcium channels (Cav). This toxin potently blocks mammalian N-type calcium channels (Cav2.2/CACNA1B) (IC(50)=600 nM on human channels). It is 60-fold more potent in displacing radiolabeled omega-conotoxin GVIA from fish brain membranes than from human SH-SY5Y cells. In vivo, when tested on rat neuropathic pain model, this toxin shows an analgesic activity. This chain is Omega-conotoxin MoVIA, found in Conus moncuri (Sea snail).